Consider the following 400-residue polypeptide: Subtilisin-like protease CPC735_047380 (400 aa).

The first 19 residues, 1–19, serve as a signal peptide directing secretion; the sequence is MARINVVVSFLAALAVVQA. A propeptide spanning residues 20-118 is cleaved from the precursor; the sequence is AQLLNLDGQK…IEPQRTFRAF (99 aa). The Inhibitor I9 domain maps to 35 to 116; that stretch reads SYVVVMNDGL…NYIEPQRTFR (82 aa). The region spanning 128–400 is the Peptidase S8 domain; the sequence is SWGLGRISHT…DKLLYNGSGQ (273 aa). Asparagine 153 carries an N-linked (GlcNAc...) asparagine glycan. Catalysis depends on charge relay system residues aspartate 160 and histidine 191. Residues asparagine 244 and asparagine 252 are each glycosylated (N-linked (GlcNAc...) asparagine). Serine 346 (charge relay system) is an active-site residue. Asparagine 396 carries an N-linked (GlcNAc...) asparagine glycan.

Belongs to the peptidase S8 family.

Its subcellular location is the secreted. Functionally, secreted subtilisin-like serine protease with keratinolytic activity that contributes to pathogenicity. In Coccidioides posadasii (strain C735) (Valley fever fungus), this protein is Subtilisin-like protease CPC735_047380.